The following is a 38-amino-acid chain: Large ribosomal subunit protein bL36 (38 aa).

This sequence belongs to the bacterial ribosomal protein bL36 family.

This is Large ribosomal subunit protein bL36 from Saccharophagus degradans (strain 2-40 / ATCC 43961 / DSM 17024).